A 102-amino-acid chain; its full sequence is Small ribosomal subunit protein uS10 (102 aa).

The protein belongs to the universal ribosomal protein uS10 family. In terms of assembly, part of the 30S ribosomal subunit.

In terms of biological role, involved in the binding of tRNA to the ribosomes. The chain is Small ribosomal subunit protein uS10 from Rhizobium meliloti (strain 1021) (Ensifer meliloti).